A 381-amino-acid polypeptide reads, in one-letter code: Methanesulfonate monooxygenase (381 aa).

The protein belongs to the SsuD family.

The enzyme catalyses an alkanesulfonate + FMNH2 + O2 = an aldehyde + FMN + sulfite + H2O + 2 H(+). In terms of biological role, catalyzes the desulfonation of aliphatic sulfonates. Shows highest activity with methanesulfonate. The sequence is that of Methanesulfonate monooxygenase (msuD) from Pseudomonas aeruginosa (strain ATCC 15692 / DSM 22644 / CIP 104116 / JCM 14847 / LMG 12228 / 1C / PRS 101 / PAO1).